A 298-amino-acid chain; its full sequence is Ethanolamine ammonia-lyase small subunit (298 aa).

Valine 210, glutamate 231, and cysteine 261 together coordinate adenosylcob(III)alamin.

This sequence belongs to the EutC family. As to quaternary structure, the basic unit is a heterodimer which dimerizes to form tetramers. The heterotetramers trimerize; 6 large subunits form a core ring with 6 small subunits projecting outwards. Requires adenosylcob(III)alamin as cofactor.

It is found in the bacterial microcompartment. The catalysed reaction is ethanolamine = acetaldehyde + NH4(+). It participates in amine and polyamine degradation; ethanolamine degradation. Functionally, catalyzes the deamination of various vicinal amino-alcohols to oxo compounds. Allows this organism to utilize ethanolamine as the sole source of nitrogen and carbon in the presence of external vitamin B12. The protein is Ethanolamine ammonia-lyase small subunit of Salmonella typhi.